The following is a 108-amino-acid chain: Monothiol bacilliredoxin BrxC (108 aa).

An S-bacillithiol cysteine disulfide modification is found at Cys31.

As to quaternary structure, interacts with AbrB, BdhA, Bdr, BrxB, FolD, GapA, GapB, GatA, PfkA, PyrAA, PyrAB, PyrE, PyrG, PyrH, RpsB, RpsK, RpsL, SalA, SucC, Tuf and YtsJ. Cys can react with bacillithiol (BSH) to form mixed disulfides. S-bacillithiolation protects Cys residues against overoxidation by acting as a redox switch in response to oxidative stress.

Its function is as follows. S-bacillithiolation is the formation of mixed disulfide bonds between protein thiols and the general thiol reductant bacillithiol (BSH) under oxidative stress. BSH is an equivalent of glutathione (GSH) in Firmicutes. This protein is a monothiol bacilliredoxin, which debacillithiolates (removes BSH) the S-bacillithiolated glyceraldehyde-3-phosphate dehydrogenases (GAPDHs) GapA and GapB in vivo and probably a number of other oxidized cytosolic proteins. Debacillithiolates the S-bacillithiolated Bdr (Bdr-SSB) and BrxB (BrxB-SSB) in vitro. Involved in maintaining redox homeostasis in response to disulfide stress conditions. The sequence is that of Monothiol bacilliredoxin BrxC from Bacillus subtilis (strain 168).